A 138-amino-acid chain; its full sequence is Large ribosomal subunit protein uL16 (138 aa).

It belongs to the universal ribosomal protein uL16 family. Part of the 50S ribosomal subunit.

In terms of biological role, binds 23S rRNA and is also seen to make contacts with the A and possibly P site tRNAs. The chain is Large ribosomal subunit protein uL16 from Acholeplasma laidlawii (strain PG-8A).